The following is a 350-amino-acid chain: Cyclin-O (350 aa).

The disordered stretch occupies residues 1-89 (MVTPCPTSPS…GSPLPGPAQP (89 aa)). Positions 28 to 42 (PVKKSRRPRLRRKQP) are enriched in basic residues. Residue S81 is modified to Phosphoserine.

The protein belongs to the cyclin family. Present in respiratory cells (at protein level).

It is found in the cytoplasm. The protein resides in the nucleus. The protein localises to the nucleolus. In terms of biological role, specifically required for generation of multiciliated cells, possibly by promoting a cell cycle state compatible with centriole amplification and maturation. Acts downstream of MCIDAS to promote mother centriole amplification and maturation in preparation for apical docking. This is Cyclin-O from Homo sapiens (Human).